The chain runs to 342 residues: Platelet-activating factor receptor (342 aa).

The Extracellular portion of the chain corresponds to M1–T16. N4 is a glycosylation site (N-linked (GlcNAc...) asparagine). A helical membrane pass occupies residues L17 to W38. Residues V39–I54 lie on the Cytoplasmic side of the membrane. The chain crosses the membrane as a helical span at residues F55–I74. At V75–N91 the chain is on the extracellular side. The cysteines at positions 90 and 173 are disulfide-linked. Residues L92–Y113 traverse the membrane as a helical segment. Over N114–R133 the chain is Cytoplasmic. A helical membrane pass occupies residues G134–M155. The Extracellular segment spans residues D156–V184. N169 carries N-linked (GlcNAc...) asparagine glycosylation. Residues L185 to C205 form a helical membrane-spanning segment. The Cytoplasmic segment spans residues N206–M233. The chain crosses the membrane as a helical span at residues V234 to P254. Residues W255–Q276 are Extracellular-facing. A helical transmembrane segment spans residues V277–L296. The Cytoplasmic segment spans residues T297–N342.

Belongs to the G-protein coupled receptor 1 family. Interacts with ARRB1.

It localises to the cell membrane. Functionally, receptor for platelet activating factor, a chemotactic phospholipid mediator that possesses potent inflammatory, smooth-muscle contractile and hypotensive activity. Seems to mediate its action via a G protein that activates a phosphatidylinositol-calcium second messenger system. The protein is Platelet-activating factor receptor (PTAFR) of Cavia porcellus (Guinea pig).